A 370-amino-acid polypeptide reads, in one-letter code: Protein Brevis radix-like 3 (370 aa).

The region spanning 140 to 221 (KEWVAQVEPG…NFEKVMELYN (82 aa)) is the BRX 1 domain. Polar residues-rich tracts occupy residues 231–248 (LQTPPVSEDGGSQIQSVK) and 266–291 (PGSSGFASTPKLSSISGTKTETSSID). A disordered region spans residues 231–316 (LQTPPVSEDG…VSNASDMESE (86 aa)). The 56-residue stretch at 315 to 370 (SEWVEQDEPGIYITIRALPDGNRELRRVRFSRDKFGETHARLWWEQNRARIQQQYL) folds into the BRX 2 domain.

The protein belongs to the BRX family. In terms of tissue distribution, expressed in roots.

It localises to the nucleus. The polypeptide is Protein Brevis radix-like 3 (BRXL3) (Arabidopsis thaliana (Mouse-ear cress)).